Reading from the N-terminus, the 206-residue chain is Small ribosomal subunit protein uS4 (206 aa).

The 61-residue stretch at 96–156 (CRLDNVVYRM…EKAKNQLRIV (61 aa)) folds into the S4 RNA-binding domain.

Belongs to the universal ribosomal protein uS4 family. In terms of assembly, part of the 30S ribosomal subunit. Contacts protein S5. The interaction surface between S4 and S5 is involved in control of translational fidelity.

One of the primary rRNA binding proteins, it binds directly to 16S rRNA where it nucleates assembly of the body of the 30S subunit. Its function is as follows. With S5 and S12 plays an important role in translational accuracy. This is Small ribosomal subunit protein uS4 from Pseudomonas fluorescens (strain SBW25).